The primary structure comprises 605 residues: Podocalyxin-like protein 2 (605 aa).

An N-terminal signal peptide occupies residues 1 to 32; it reads MGRLLRAARLPPLLSPLLLLLVGGAFLGACVA. Residues 33–500 lie on the Extracellular side of the membrane; sequence GSDEPGPEGL…ASQVRSDYGT (468 aa). An O-linked (Xyl...) (chondroitin sulfate) serine glycan is attached at Ser-79. 2 positions are modified to sulfotyrosine: Tyr-97 and Tyr-118. The tract at residues 129-134 is O-glycosylated at one site; it reads SIEDTS. Positions 129–347 are disordered; that stretch reads SIEDTSQAQE…PGDMELTPSS (219 aa). O-linked (GalNAc...) serine glycosylation is present at Ser-144. The segment covering 162–189 has biased composition (acidic residues); it reads EEEEEEEEEEEREKEEVEKQEEEEEEEL. A glycan (N-linked (GlcNAc...) asparagine) is linked at Asn-193. Over residues 207–217 the composition is skewed to polar residues; the sequence is SLTSSSQTPGA. Composition is skewed to low complexity over residues 241–255 and 288–298; these read PSLL…TVTP and EATAGAAGLSG. N-linked (GlcNAc...) asparagine glycosylation occurs at Asn-395. A helical membrane pass occupies residues 501–521; that stretch reads LFVVLVVIGAICIIIIALGLL. Topologically, residues 522 to 605 are cytoplasmic; it reads YNCWQRRLPK…SDVFEEDTHL (84 aa). The interval 554 to 605 is disordered; it reads LDVASDSQSEMQEKHPSLNGGGALNGPGSWGALMGGKRDPEDSDVFEEDTHL. A Phosphoserine modification is found at Ser-570. Over residues 572–582 the composition is skewed to gly residues; the sequence is NGGGALNGPGS. Acidic residues predominate over residues 594–605; the sequence is EDSDVFEEDTHL. Ser-596 carries the post-translational modification Phosphoserine.

It belongs to the podocalyxin family. Homodimer; disulfide-linked. Interacts with SELL, SELE and SELP. O-glycosylated; contains chondroitin sulfate. Displays sialylated O-linked oligosaccharides. In terms of processing, sulfation is necessary for interaction with SELL. Sialylated O-linked oligosaccharides are necessary for interaction with SELL, SELE and SELP. In terms of tissue distribution, expressed in T-cells, B-cells and monocytes. Expression is higher on memory and germinal center cells than on naive B-cells (at protein level). Highly expressed in brain. Moderately expressed in pancreas, kidney and lymphoid node. Weakly expressed in liver. Detected in both endothelial cells and CD34+ bone marrow cells.

The protein localises to the membrane. In terms of biological role, acts as a ligand for vascular selectins. Mediates rapid rolling of leukocytes over vascular surfaces through high affinity divalent cation-dependent interactions with E-, P- and L-selectins. The sequence is that of Podocalyxin-like protein 2 (PODXL2) from Homo sapiens (Human).